A 104-amino-acid polypeptide reads, in one-letter code: UPF0145 protein HCH_01985 (104 aa).

Belongs to the UPF0145 family.

In Hahella chejuensis (strain KCTC 2396), this protein is UPF0145 protein HCH_01985.